Reading from the N-terminus, the 329-residue chain is NAD(+) hydrolase TcpA (329 aa).

One can recognise an MPN domain in the interval 5–134 (VSISYLALEQ…ADCVRFYTVR (130 aa)). In terms of domain architecture, TIR spans 192–324 (FEYDVFICHA…YVVNEILRVL (133 aa)). Residues 201–202 (AH) and S231 contribute to the NAD(+) site. E267 is a catalytic residue.

It catalyses the reaction NAD(+) + H2O = ADP-D-ribose + nicotinamide + H(+). In terms of biological role, NAD(+) hydrolase (NADase) that catalyzes cleavage of NAD(+) into ADP-D-ribose (ADPR) and nicotinamide. This Theionarchaea archaeon (strain DG-70-1) protein is NAD(+) hydrolase TcpA.